A 155-amino-acid chain; its full sequence is Endoribonuclease YbeY (155 aa).

Positions 114, 118, and 124 each coordinate Zn(2+).

This sequence belongs to the endoribonuclease YbeY family. It depends on Zn(2+) as a cofactor.

It is found in the cytoplasm. Functionally, single strand-specific metallo-endoribonuclease involved in late-stage 70S ribosome quality control and in maturation of the 3' terminus of the 16S rRNA. The chain is Endoribonuclease YbeY from Baumannia cicadellinicola subsp. Homalodisca coagulata.